Reading from the N-terminus, the 55-residue chain is Large ribosomal subunit protein bL33 (55 aa).

It belongs to the bacterial ribosomal protein bL33 family.

The protein is Large ribosomal subunit protein bL33 of Paraburkholderia phytofirmans (strain DSM 17436 / LMG 22146 / PsJN) (Burkholderia phytofirmans).